We begin with the raw amino-acid sequence, 548 residues long: 2-succinyl-5-enolpyruvyl-6-hydroxy-3-cyclohexene-1-carboxylate synthase (548 aa).

It belongs to the TPP enzyme family. MenD subfamily. As to quaternary structure, homodimer. Mg(2+) is required as a cofactor. It depends on Mn(2+) as a cofactor. Requires thiamine diphosphate as cofactor.

The catalysed reaction is isochorismate + 2-oxoglutarate + H(+) = 5-enolpyruvoyl-6-hydroxy-2-succinyl-cyclohex-3-ene-1-carboxylate + CO2. It participates in quinol/quinone metabolism; 1,4-dihydroxy-2-naphthoate biosynthesis; 1,4-dihydroxy-2-naphthoate from chorismate: step 2/7. The protein operates within quinol/quinone metabolism; menaquinone biosynthesis. In terms of biological role, catalyzes the thiamine diphosphate-dependent decarboxylation of 2-oxoglutarate and the subsequent addition of the resulting succinic semialdehyde-thiamine pyrophosphate anion to isochorismate to yield 2-succinyl-5-enolpyruvyl-6-hydroxy-3-cyclohexene-1-carboxylate (SEPHCHC). This chain is 2-succinyl-5-enolpyruvyl-6-hydroxy-3-cyclohexene-1-carboxylate synthase, found in Mycobacterium marinum (strain ATCC BAA-535 / M).